Here is a 397-residue protein sequence, read N- to C-terminus: DnaJ homolog subfamily A member 1 (397 aa).

The region spanning 6-68 (TYYDVLGVKP…KKRELYDKGG (63 aa)) is the J domain. Lysine 66 is modified (N6-acetyllysine). Phosphoserine is present on serine 83. Residues 121-205 (GATRKLALQK…CNGRKIVREK (85 aa)) form a CR-type zinc finger. The Zn(2+) site is built by cysteine 134, cysteine 137, cysteine 150, cysteine 153, cysteine 177, cysteine 180, cysteine 193, and cysteine 196. CXXCXGXG motif repeat units lie at residues 134 to 141 (CDKCEGRG), 150 to 157 (CPNCRGTG), 177 to 184 (CMECQGHG), and 193 to 200 (CKSCNGRK). Serine 335 is subject to Phosphoserine. The interval 352–397 (VEETDEMDQVELVDFDPNQERRRHYNGEAYEDDEHHPRGGVQCQTS) is disordered. Acidic residues predominate over residues 353-365 (EETDEMDQVELVD). The residue at position 381 (tyrosine 381) is a Phosphotyrosine. Position 394 is a cysteine methyl ester (cysteine 394). Cysteine 394 carries S-farnesyl cysteine lipidation. Positions 395–397 (QTS) are cleaved as a propeptide — removed in mature form.

In terms of assembly, identified in a complex with HSPA1B and BAX. Interacts with RNF207.

It localises to the membrane. The protein resides in the cytoplasm. The protein localises to the microsome. It is found in the mitochondrion. Its subcellular location is the nucleus. It localises to the perinuclear region. Co-chaperone for HSPA8/Hsc70. Plays a role in protein transport into mitochondria via its role as co-chaperone. Functions as co-chaperone for HSPA1B and negatively regulates the translocation of BAX from the cytosol to mitochondria in response to cellular stress, thereby protecting cells against apoptosis. Stimulates ATP hydrolysis, but not the folding of unfolded proteins mediated by HSPA1A (in vitro). Promotes apoptosis in response to cellular stress mediated by exposure to anisomycin or UV. In Chlorocebus aethiops (Green monkey), this protein is DnaJ homolog subfamily A member 1 (DNAJA1).